Here is a 131-residue protein sequence, read N- to C-terminus: Chorion class high-cysteine HCB protein 12 (131 aa).

A signal peptide spans 1–21 (MAAKLIVFVCAIALVAQSVLG). Positions 22–46 (TGCGCCCRGCGCGCGGCGCGCCENF) are left arm. The tract at residues 47 to 110 (RVCSNSAAPT…GNGCVGITRS (64 aa)) is central domain. The segment at 111–131 (CGGCGCGCGGCGCGCGGCGCC) is right arm (Gly-rich tandem repeats).

The protein belongs to the chorion protein family.

Functionally, this protein is one of many from the eggshell of the silk moth. The polypeptide is Chorion class high-cysteine HCB protein 12 (Bombyx mori (Silk moth)).